We begin with the raw amino-acid sequence, 214 residues long: Probable transaldolase (214 aa).

K83 functions as the Schiff-base intermediate with substrate in the catalytic mechanism.

It belongs to the transaldolase family. Type 3B subfamily.

It is found in the cytoplasm. It carries out the reaction D-sedoheptulose 7-phosphate + D-glyceraldehyde 3-phosphate = D-erythrose 4-phosphate + beta-D-fructose 6-phosphate. It functions in the pathway carbohydrate degradation; pentose phosphate pathway; D-glyceraldehyde 3-phosphate and beta-D-fructose 6-phosphate from D-ribose 5-phosphate and D-xylulose 5-phosphate (non-oxidative stage): step 2/3. In terms of biological role, transaldolase is important for the balance of metabolites in the pentose-phosphate pathway. This Desulfosudis oleivorans (strain DSM 6200 / JCM 39069 / Hxd3) (Desulfococcus oleovorans) protein is Probable transaldolase.